The following is a 103-amino-acid chain: uncharacterized protein (103 aa).

This is an uncharacterized protein from Saccharomyces cerevisiae (strain ATCC 204508 / S288c) (Baker's yeast).